A 469-amino-acid polypeptide reads, in one-letter code: RNA-editing ligase 1, mitochondrial (469 aa).

Residues 1–44 constitute a mitochondrion transit peptide; the sequence is MQLQRLGAPLLKRLVGGCIRQSTAPIMPCVVVSGSGGFLTPVRT. ATP-binding positions include 59–61, 86–92, Asn-92, Arg-111, Glu-159, Phe-209, and 307–309; these read IEI, EKVHGTN, and KLR. Catalysis depends on Lys-87, which acts as the N6-AMP-lysine intermediate. The disordered stretch occupies residues 450–469; the sequence is AAAQSEAIPPLSPAAPTKGE.

It belongs to the RNA ligase 2 family. As to quaternary structure, component of the RNA editing complex (editosome), a 1600 kDa complex composed of at least 20 proteins. Interacts with terminal uridylyltransferase MEAT1.

It is found in the mitochondrion. The enzyme catalyses ATP + (ribonucleotide)n-3'-hydroxyl + 5'-phospho-(ribonucleotide)m = (ribonucleotide)n+m + AMP + diphosphate.. In terms of biological role, essential for RNA editing. RNA editing in kinetoplastid mitochondria inserts and deletes uridylates at multiple sites in pre-mRNAs as directed by guide RNAs. The protein is RNA-editing ligase 1, mitochondrial (REL1) of Trypanosoma brucei brucei (strain 927/4 GUTat10.1).